A 619-amino-acid polypeptide reads, in one-letter code: Replication restart protein PriA (619 aa).

In terms of domain architecture, Helicase ATP-binding spans 119–285 (LKELQKHPAS…KDKALVRLKG (167 aa)). 132 to 139 (GDTGSGKT) contributes to the ATP binding site. The DEAH box signature appears at 228–231 (DEEH). Residues cysteine 336, cysteine 339, cysteine 345, cysteine 348, cysteine 363, cysteine 366, cysteine 376, and cysteine 379 each contribute to the Zn(2+) site. The Helicase C-terminal domain maps to 371–532 (PIPKICNACQ…ELYPPFSRLC (162 aa)).

It belongs to the helicase family. PriA subfamily. As to quaternary structure, component of the replication restart primosome. Zn(2+) serves as cofactor.

The catalysed reaction is Couples ATP hydrolysis with the unwinding of duplex DNA by translocating in the 3'-5' direction.. It carries out the reaction ATP + H2O = ADP + phosphate + H(+). Its function is as follows. Initiates the restart of stalled replication forks, which reloads the replicative helicase on sites other than the origin of replication. Recognizes and binds to abandoned replication forks and remodels them to uncover a helicase loading site. Promotes assembly of the primosome at these replication forks. This chain is Replication restart protein PriA, found in Helicobacter pylori (strain J99 / ATCC 700824) (Campylobacter pylori J99).